Consider the following 382-residue polypeptide: Polyadenylate-binding protein 5 (382 aa).

RRM domains follow at residues 18–96, 106–182, 199–276, and 302–378; these read AALY…WSQP, GNIF…RFKF, TNVF…RAQK, and VPIY…LGQA.

The protein localises to the cytoplasm. Binds the poly(A) tail of mRNA. May be involved in cytoplasmic regulatory processes of mRNA metabolism. Can probably bind to cytoplasmic RNA sequences other than poly(A) in vivo. The protein is Polyadenylate-binding protein 5 (PABPC5) of Gorilla gorilla gorilla (Western lowland gorilla).